Consider the following 428-residue polypeptide: Adenylosuccinate synthetase (428 aa).

GTP contacts are provided by residues 12–18 and 40–42; these read GDEGKGK and GHS. The active-site Proton acceptor is Asp13. Asp13 and Gly40 together coordinate Mg(2+). IMP is bound by residues 13–16, 38–41, Thr128, Arg142, Gln223, Thr238, and Arg302; these read DEGK and NAGH. Residue His41 is the Proton donor of the active site. A substrate-binding site is contributed by 298-304; sequence VTTGRPR. GTP is bound by residues Arg304, 330-332, and 412-414; these read KLD and GTG.

The protein belongs to the adenylosuccinate synthetase family. In terms of assembly, homodimer. It depends on Mg(2+) as a cofactor.

Its subcellular location is the cytoplasm. It carries out the reaction IMP + L-aspartate + GTP = N(6)-(1,2-dicarboxyethyl)-AMP + GDP + phosphate + 2 H(+). Its pathway is purine metabolism; AMP biosynthesis via de novo pathway; AMP from IMP: step 1/2. Its function is as follows. Plays an important role in the de novo pathway of purine nucleotide biosynthesis. Catalyzes the first committed step in the biosynthesis of AMP from IMP. The polypeptide is Adenylosuccinate synthetase (Bifidobacterium longum (strain DJO10A)).